We begin with the raw amino-acid sequence, 208 residues long: Uracil phosphoribosyltransferase (208 aa).

Residues Arg-78, Arg-103, and 130 to 138 (DPMLATGGS) contribute to the 5-phospho-alpha-D-ribose 1-diphosphate site. Uracil is bound by residues Ile-193 and 198–200 (GDA). Residue Asp-199 coordinates 5-phospho-alpha-D-ribose 1-diphosphate.

This sequence belongs to the UPRTase family. Mg(2+) is required as a cofactor.

It catalyses the reaction UMP + diphosphate = 5-phospho-alpha-D-ribose 1-diphosphate + uracil. Its pathway is pyrimidine metabolism; UMP biosynthesis via salvage pathway; UMP from uracil: step 1/1. With respect to regulation, allosterically activated by GTP. Its function is as follows. Catalyzes the conversion of uracil and 5-phospho-alpha-D-ribose 1-diphosphate (PRPP) to UMP and diphosphate. This is Uracil phosphoribosyltransferase from Shewanella woodyi (strain ATCC 51908 / MS32).